The chain runs to 242 residues: Guanylate kinase (242 aa).

The Guanylate kinase-like domain occupies 22-200 (GLLIVMTGAS…AVRELQAVQR (179 aa)). 29–36 (GASGVGKG) contacts ATP.

The protein belongs to the guanylate kinase family.

It is found in the cytoplasm. The catalysed reaction is GMP + ATP = GDP + ADP. Functionally, essential for recycling GMP and indirectly, cGMP. This chain is Guanylate kinase, found in Deinococcus geothermalis (strain DSM 11300 / CIP 105573 / AG-3a).